The chain runs to 379 residues: Stimulator of interferon genes protein (379 aa).

Helical transmembrane passes span 20–40 (VAAFVLLIVCLAALWKLGEPS), 87–107 (ACLGCPIRYGAVLLLSCYFYV), and 115–135 (LPLTWMLAHLGLSEALNILLG). 2 S-palmitoyl cysteine lipidation sites follow: Cys88 and Cys91. Residues 153–340 (FNVAHGLAWS…KHLRQEEREE (188 aa)) form a cyclic dinucleotide-binding domain (CBD) region. 2',3'-cGAMP is bound by residues Ser162, Tyr167, Arg238, and Thr263. 3',3'-c-di-GMP-binding positions include Ser162, Tyr167, 238–241 (RVYT), and Thr263. Residues Tyr167, Arg238, and Thr263 each coordinate 2',3'-cUAMP. The interval 340-379 (EVTMGTAGTFVAPGSSTLHQEPELLISGMDQPLPLRTDIF) is C-terminal tail (CTT). Ser355 is subject to Phosphoserine. The residue at position 356 (Thr356) is a Phosphothreonine. Residues 363–366 (LLIS) carry the pLxIS motif motif. A Phosphoserine; by TBK1 modification is found at Ser366.

It belongs to the STING family. Homodimer; forms a homodimer in absence of cyclic nucleotide (c-di-GMP or cGAMP). Homotetramer; in presence of cyclic nucleotide (c-di-GMP or cGAMP), forms tetramers and higher-order oligomers through side-by-side packing. Interacts (when phosphorylated) with IRF3; following activation and phosphorylation on the pLxIS motif by TBK1, recruits IRF3. Interacts with TBK1; when homodimer, leading to subsequent production of IFN-beta. Interacts (via transmembrane domain) with TMEM203. Phosphorylation by TBK1 leads to activation and production of IFN-beta. Following cyclic nucleotide (c-di-GMP or cGAMP)-binding, activation and translocation from the endoplasmic reticulum, STING1 is phosphorylated by TBK1 at Ser-366 in the pLxIS motif. The phosphorylated pLxIS motif constitutes an IRF3-binding motif, leading to recruitment of the transcription factor IRF3 to induce type-I interferons and other cytokines. In contrast, lacks phosphorylation site at position 358, leading to reduced production of type-I interferons and other cytokines.

The protein resides in the endoplasmic reticulum membrane. The protein localises to the cytoplasm. It is found in the perinuclear region. It localises to the endoplasmic reticulum-Golgi intermediate compartment membrane. Its subcellular location is the golgi apparatus membrane. The protein resides in the cytoplasmic vesicle. The protein localises to the autophagosome membrane. It is found in the mitochondrion outer membrane. It localises to the cell membrane. The catalysed reaction is H(+)(in) = H(+)(out). Functionally, facilitator of innate immune signaling that acts as a sensor of cytosolic DNA from bacteria and viruses and promotes low production of type I interferon (IFN-alpha and IFN-beta). Compared to other mammals, STING1-dependent type I interferon induction is strongly reduced in bats, suggesting that the cGAS-STING pathway promotes a limited inflammatory response. Innate immune response is triggered in response to non-CpG double-stranded DNA from viruses and bacteria delivered to the cytoplasm. Acts by binding cyclic dinucleotides: recognizes and binds cyclic di-GMP (c-di-GMP), a second messenger produced by bacteria, cyclic UMP-AMP (2',3'-cUAMP), and cyclic GMP-AMP (cGAMP), a messenger produced by CGAS in response to DNA virus in the cytosol. Upon binding to c-di-GMP, cUAMP or cGAMP, STING1 oligomerizes, translocates from the endoplasmic reticulum and is phosphorylated by TBK1 on the pLxIS motif, leading to recruitment and subsequent activation of the transcription factor IRF3 to induce expression of type I interferon and exert a potent anti-viral state. In addition to promote the production of type I interferons, plays a direct role in autophagy. Following cGAMP-binding, STING1 buds from the endoplasmic reticulum into COPII vesicles, which then form the endoplasmic reticulum-Golgi intermediate compartment (ERGIC). The ERGIC serves as the membrane source for WIPI2 recruitment and LC3 lipidation, leading to formation of autophagosomes that target cytosolic DNA or DNA viruses for degradation by the lysosome. Promotes autophagy by acting as a proton channel that directs proton efflux from the Golgi to facilitate MAP1LC3B/LC3B lipidation. The autophagy- and interferon-inducing activities can be uncoupled and autophagy induction is independent of TBK1 phosphorylation. This Eidolon helvum (Straw-colored fruit bat) protein is Stimulator of interferon genes protein.